The chain runs to 265 residues: tRNA pseudouridine synthase A (265 aa).

D52 serves as the catalytic Nucleophile. Y105 is a binding site for substrate.

This sequence belongs to the tRNA pseudouridine synthase TruA family.

It carries out the reaction uridine(38/39/40) in tRNA = pseudouridine(38/39/40) in tRNA. Formation of pseudouridine at positions 38, 39 and 40 in the anticodon stem and loop of transfer RNAs. This is tRNA pseudouridine synthase A from Archaeoglobus fulgidus (strain ATCC 49558 / DSM 4304 / JCM 9628 / NBRC 100126 / VC-16).